The primary structure comprises 418 residues: Gamma-glutamyl phosphate reductase (418 aa).

A compositionally biased stretch (basic and acidic residues) spans 1–18 (MAIQDEMRQVAEGAREAS). The segment at 1–22 (MAIQDEMRQVAEGAREASRTLS) is disordered.

Belongs to the gamma-glutamyl phosphate reductase family.

The protein resides in the cytoplasm. The enzyme catalyses L-glutamate 5-semialdehyde + phosphate + NADP(+) = L-glutamyl 5-phosphate + NADPH + H(+). The protein operates within amino-acid biosynthesis; L-proline biosynthesis; L-glutamate 5-semialdehyde from L-glutamate: step 2/2. Its function is as follows. Catalyzes the NADPH-dependent reduction of L-glutamate 5-phosphate into L-glutamate 5-semialdehyde and phosphate. The product spontaneously undergoes cyclization to form 1-pyrroline-5-carboxylate. The polypeptide is Gamma-glutamyl phosphate reductase (Syntrophus aciditrophicus (strain SB)).